We begin with the raw amino-acid sequence, 126 residues long: Methylglyoxal synthase (126 aa).

The MGS-like domain maps to 1-126 (MEKKIALIAH…LIKGLESLIF (126 aa)). Substrate contacts are provided by residues H10, K14, 36 to 39 (TGTT), and 56 to 57 (SG). D62 acts as the Proton donor/acceptor in catalysis. H89 is a binding site for substrate.

This sequence belongs to the methylglyoxal synthase family.

The catalysed reaction is dihydroxyacetone phosphate = methylglyoxal + phosphate. Its function is as follows. Catalyzes the formation of methylglyoxal from dihydroxyacetone phosphate. This is Methylglyoxal synthase from Borreliella burgdorferi (strain ATCC 35210 / DSM 4680 / CIP 102532 / B31) (Borrelia burgdorferi).